We begin with the raw amino-acid sequence, 102 residues long: Large ribosomal subunit protein bL21 (102 aa).

Belongs to the bacterial ribosomal protein bL21 family. Part of the 50S ribosomal subunit. Contacts protein L20.

In terms of biological role, this protein binds to 23S rRNA in the presence of protein L20. This Bacillus pumilus (strain SAFR-032) protein is Large ribosomal subunit protein bL21.